The primary structure comprises 305 residues: PI-PLC X domain-containing protein 1 (305 aa).

The first 24 residues, 1–24 (MSMSTLRHFLWLGALLLATIQVSA), serve as a signal peptide directing secretion. The 165-residue stretch at 25–189 (LPTAQDLICN…RLIVFVDSKA (165 aa)) folds into the PI-PLC X-box domain. Active-site residues include His53 and His97. An N-linked (GlcNAc...) asparagine glycan is attached at Asn237.

The protein localises to the secreted. This chain is PI-PLC X domain-containing protein 1, found in Arthroderma benhamiae (strain ATCC MYA-4681 / CBS 112371) (Trichophyton mentagrophytes).